Here is a 481-residue protein sequence, read N- to C-terminus: Coniferyl aldehyde dehydrogenase (481 aa).

Active-site residues include E221 and C255.

The protein belongs to the aldehyde dehydrogenase family. Homodimer.

It catalyses the reaction (E)-coniferaldehyde + NADP(+) + H2O = (E)-ferulate + NADPH + 2 H(+). The catalysed reaction is (E)-coniferaldehyde + NAD(+) + H2O = (E)-ferulate + NADH + 2 H(+). Its function is as follows. Catalyzes the NAD(+)-dependent oxidation of coniferyl aldehyde to ferulic acid and which is induced during growth with eugenol as the carbon source. The chain is Coniferyl aldehyde dehydrogenase (calB) from Pseudomonas sp. (strain HR199 / DSM 7063).